Consider the following 436-residue polypeptide: MENNNKNINTTNNSTTINTNNNNNPINKNNNNNNINNNNNNNINNINNINNVNNNNNNNNNNNNNNNNNNNNNNNNNNNNNNNNNNINNNNNNINNNNINKKNINNINKNKINNNNNNEIGEEKAVEGGFLAGLSRNVTRIIGSFSSGMAEESAGYPLDLIKTRIQLSQSGVSGGGGTNTSIIKIFKDVIKTEGVIGLFKGLSSPLILSALVTAIQFGLFEDTLKYFRKHQYFKNHDTLSLLFSGSIAGFAQSFITCPVDLVKIQMQIQGIPSSQPNSNNNNNNNKAKGNSYFTKLIYREKGLLGFYQGLSPTLFRDVPGLAIFFTTYETLKKQFGQPELSTQSPTEFIKSFIPIVLSGGSAGVFYHGLTHPFDIAKTLIQSDRSATKYKGTFDCLKQVYQNQGPKSLFKGFSAVAIKSFQSNAVGFLVYEMVINL.

The interval 1 to 102 (MENNNKNINT…NINNNNINKK (102 aa)) is disordered. Residues 1–137 (MENNNKNINT…GGFLAGLSRN (137 aa)) lie on the Mitochondrial intermembrane side of the membrane. 2 Solcar repeats span residues 135 to 226 (SRNV…TLKY) and 236 to 334 (HDTL…LKKQ). The helical transmembrane segment at 138 to 158 (VTRIIGSFSSGMAEESAGYPL) threads the bilayer. Topologically, residues 159–194 (DLIKTRIQLSQSGVSGGGGTNTSIIKIFKDVIKTEG) are mitochondrial matrix. Residues 195–215 (VIGLFKGLSSPLILSALVTAI) form a helical membrane-spanning segment. The Mitochondrial intermembrane portion of the chain corresponds to 216–238 (QFGLFEDTLKYFRKHQYFKNHDT). A helical transmembrane segment spans residues 239 to 259 (LSLLFSGSIAGFAQSFITCPV). The Mitochondrial matrix segment spans residues 260–313 (DLVKIQMQIQGIPSSQPNSNNNNNNNKAKGNSYFTKLIYREKGLLGFYQGLSPT). Residues 314–334 (LFRDVPGLAIFFTTYETLKKQ) form a helical membrane-spanning segment. The Mitochondrial intermembrane segment spans residues 335-347 (FGQPELSTQSPTE). A helical transmembrane segment spans residues 348–368 (FIKSFIPIVLSGGSAGVFYHG). One copy of the Solcar 3 repeat lies at 350–436 (KSFIPIVLSG…FLVYEMVINL (87 aa)). Over 369–413 (LTHPFDIAKTLIQSDRSATKYKGTFDCLKQVYQNQGPKSLFKGFS) the chain is Mitochondrial matrix. The chain crosses the membrane as a helical span at residues 414-434 (AVAIKSFQSNAVGFLVYEMVI). The Mitochondrial intermembrane portion of the chain corresponds to 435 to 436 (NL).

The protein belongs to the mitochondrial carrier (TC 2.A.29) family.

The protein localises to the mitochondrion inner membrane. Mitochondrial solute carriers shuttle metabolites, nucleotides, and cofactors through the mitochondrial inner membrane. This Dictyostelium discoideum (Social amoeba) protein is Mitochondrial substrate carrier family protein Y (mcfY).